Here is a 401-residue protein sequence, read N- to C-terminus: Acetate kinase (401 aa).

Asn-7 provides a ligand contact to Mg(2+). Lys-14 is an ATP binding site. Residue Arg-90 coordinates substrate. Catalysis depends on Asp-147, which acts as the Proton donor/acceptor. ATP-binding positions include 207-211 (HMGNG), 282-284 (DMR), and 331-335 (GIGEN). Position 385 (Glu-385) interacts with Mg(2+).

Belongs to the acetokinase family. As to quaternary structure, homodimer. Mg(2+) is required as a cofactor. Requires Mn(2+) as cofactor.

Its subcellular location is the cytoplasm. The enzyme catalyses acetate + ATP = acetyl phosphate + ADP. It participates in metabolic intermediate biosynthesis; acetyl-CoA biosynthesis; acetyl-CoA from acetate: step 1/2. Its function is as follows. Catalyzes the formation of acetyl phosphate from acetate and ATP. Can also catalyze the reverse reaction. The polypeptide is Acetate kinase (Clostridium acetobutylicum (strain ATCC 824 / DSM 792 / JCM 1419 / IAM 19013 / LMG 5710 / NBRC 13948 / NRRL B-527 / VKM B-1787 / 2291 / W)).